The sequence spans 480 residues: Phosphomethylpyrimidine synthase (480 aa).

Substrate is bound by residues asparagine 66, methionine 95, tyrosine 124, histidine 159, 179–181, 220–223, and glutamate 259; these read SRG and DGLR. Histidine 263 provides a ligand contact to Zn(2+). Residue tyrosine 286 participates in substrate binding. A Zn(2+)-binding site is contributed by histidine 327. [4Fe-4S] cluster is bound by residues cysteine 407, cysteine 410, and cysteine 415. Residues 426–480 are disordered; sequence DGDMESIEADADDRTPLEDSSAAAVNRPPVGTHDGADIPGPDADMPADTEGSADD. Over residues 470 to 480 the composition is skewed to acidic residues; it reads MPADTEGSADD.

It belongs to the ThiC family. It depends on [4Fe-4S] cluster as a cofactor.

The enzyme catalyses 5-amino-1-(5-phospho-beta-D-ribosyl)imidazole + S-adenosyl-L-methionine = 4-amino-2-methyl-5-(phosphooxymethyl)pyrimidine + CO + 5'-deoxyadenosine + formate + L-methionine + 3 H(+). Its pathway is cofactor biosynthesis; thiamine diphosphate biosynthesis. In terms of biological role, catalyzes the synthesis of the hydroxymethylpyrimidine phosphate (HMP-P) moiety of thiamine from aminoimidazole ribotide (AIR) in a radical S-adenosyl-L-methionine (SAM)-dependent reaction. The sequence is that of Phosphomethylpyrimidine synthase from Haloarcula marismortui (strain ATCC 43049 / DSM 3752 / JCM 8966 / VKM B-1809) (Halobacterium marismortui).